The primary structure comprises 89 residues: UPF0298 protein GTNG_0961 (89 aa).

It belongs to the UPF0298 family.

Its subcellular location is the cytoplasm. This Geobacillus thermodenitrificans (strain NG80-2) protein is UPF0298 protein GTNG_0961.